We begin with the raw amino-acid sequence, 448 residues long: Hydroxycinnamoyl-CoA:piscidic acid hydroxycinnamoyltransferase (448 aa).

Catalysis depends on proton acceptor residues His-153 and Asp-395.

Belongs to the plant acyltransferase family. In terms of tissue distribution, highly expressed in root and rhizome. Expressed in senescent leaf and callus tissues. Expressed in detached leaf treated for 18 hours with ethephon, methyl jasmonate, salicylic acid or illuminated for 24 hours with UV light. Not expressed in mature leaf. Expressed at low levels in leaves and flowers.

The enzyme catalyses (2R,3S)-piscidate + (E)-4-coumaroyl-CoA = cimicifugate K + CoA. The catalysed reaction is (2R,3S)-piscidate + (E)-caffeoyl-CoA = cimicifugate D + CoA. It catalyses the reaction (2R,3S)-piscidate + (E)-sinapoyl-CoA = cimicifugate J + CoA. It carries out the reaction (2R,3S)-piscidate + (E)-feruloyl-CoA = cimicifugate E + CoA. It participates in phenylpropanoid metabolism. In terms of biological role, catalyzes the formation of cimicifugic acids. Uses hydroxycinnamoyl-CoA thioesters as hydroxycinnamoyl donor substrates. Has a strict specificity for piscidic acid as an acceptor substrate as none of the various other acceptors tested including 4-hydroxyphenyllactic acid, malate, spermidine or tetrahydroxyhexanedioic acid are substrates. Donor substrates include 4-coumaroyl-CoA, caffeoyl-CoA, sinapoyl-CoA and feruloyl-CoA. No activity with cinnamoyl-CoA, isoferuloyl-CoA, 3,4-dimethoxycinnamoyl-CoA or 3,4-dihydroxybenzoyl-CoA as donors. In the reverse reaction with fukinolic acid and CoA as substrates, a formation of fukiic acid is evident. Hence, fukiic acid may also serve as an acceptor substrate. Involved in the biosynthesis of cimicifugic and possibly fukinolic acids. In Actaea racemosa (Black cohosh), this protein is Hydroxycinnamoyl-CoA:piscidic acid hydroxycinnamoyltransferase.